Consider the following 368-residue polypeptide: 3-dehydroquinate synthase (368 aa).

Residues 69–74 (DGEAYK), 103–107 (GVIGD), 127–128 (TT), Lys-140, and Lys-149 contribute to the NAD(+) site. Zn(2+)-binding residues include Glu-182, His-245, and His-262.

The protein belongs to the sugar phosphate cyclases superfamily. Dehydroquinate synthase family. It depends on Co(2+) as a cofactor. Zn(2+) is required as a cofactor. Requires NAD(+) as cofactor.

It is found in the cytoplasm. It carries out the reaction 7-phospho-2-dehydro-3-deoxy-D-arabino-heptonate = 3-dehydroquinate + phosphate. The protein operates within metabolic intermediate biosynthesis; chorismate biosynthesis; chorismate from D-erythrose 4-phosphate and phosphoenolpyruvate: step 2/7. Functionally, catalyzes the conversion of 3-deoxy-D-arabino-heptulosonate 7-phosphate (DAHP) to dehydroquinate (DHQ). In Pseudomonas aeruginosa (strain UCBPP-PA14), this protein is 3-dehydroquinate synthase.